The sequence spans 172 residues: Large ribosomal subunit protein uL10 (172 aa).

Belongs to the universal ribosomal protein uL10 family. Part of the ribosomal stalk of the 50S ribosomal subunit. The N-terminus interacts with L11 and the large rRNA to form the base of the stalk. The C-terminus forms an elongated spine to which L12 dimers bind in a sequential fashion forming a multimeric L10(L12)X complex.

Its function is as follows. Forms part of the ribosomal stalk, playing a central role in the interaction of the ribosome with GTP-bound translation factors. The sequence is that of Large ribosomal subunit protein uL10 from Chlorobium phaeobacteroides (strain DSM 266 / SMG 266 / 2430).